The sequence spans 433 residues: sn-glycerol-3-phosphate-binding periplasmic protein UgpB (433 aa).

A signal peptide spans 1–25 (MFTRLITTSALTGAIALTIGSQAFA). 7 residues coordinate sn-glycerol 3-phosphate: Y67, D91, S146, S273, G307, Y346, and R397.

Belongs to the bacterial solute-binding protein 1 family. As to quaternary structure, the complex is composed of two ATP-binding proteins (UgpC), two transmembrane proteins (UgpA and UgpE) and a solute-binding protein (UgpB).

Its subcellular location is the periplasm. Functionally, part of the ABC transporter complex UgpBAEC involved in sn-glycerol-3-phosphate (G3P) import. Binds G3P. The chain is sn-glycerol-3-phosphate-binding periplasmic protein UgpB (ugpB) from Brucella melitensis biotype 1 (strain ATCC 23456 / CCUG 17765 / NCTC 10094 / 16M).